Reading from the N-terminus, the 318-residue chain is Nitrate reductase [NADH] (318 aa).

Positions 216–291 (AKSFTMAEVE…LLEYYIGELA (76 aa)) constitute a Cytochrome b5 heme-binding domain. Heme contacts are provided by His251 and His274.

This sequence belongs to the nitrate reductase family. As to quaternary structure, homodimer. It depends on FAD as a cofactor. Heme is required as a cofactor. Mo-molybdopterin serves as cofactor.

The enzyme catalyses nitrite + NAD(+) + H2O = nitrate + NADH + H(+). Functionally, nitrate reductase is a key enzyme involved in the first step of nitrate assimilation in plants, fungi and bacteria. This chain is Nitrate reductase [NADH], found in Chlorella vulgaris (Green alga).